The chain runs to 404 residues: Triose phosphate/phosphate translocator, chloroplastic (404 aa).

The transit peptide at Met-1 to Thr-74 directs the protein to the chloroplast. Residues Ala-75 to Pro-98 lie on the Chloroplast intermembrane side of the membrane. A helical transmembrane segment spans residues Ala-99–Leu-119. Over Asn-120–Tyr-131 the chain is Lumenal. A helical membrane pass occupies residues Phe-132–Gly-152. Residues Leu-153–Gln-209 are Chloroplast intermembrane-facing. Residues Phe-210–Gly-230 traverse the membrane as a helical segment. The Lumenal segment spans residues Val-231–Asn-274. Residues Ile-275–Val-294 form a helical membrane-spanning segment. Residues Glu-295–Gln-372 are Chloroplast intermembrane-facing. The helical transmembrane segment at Thr-373 to Lys-393 threads the bilayer. Over Met-394 to Thr-404 the chain is Lumenal.

The protein belongs to the TPT transporter family. TPT (TC 2.A.7.9) subfamily. The N-terminus is blocked.

It is found in the plastid. It localises to the chloroplast membrane. Functionally, mediates the export of fixed carbons from the chloroplasts into the cytosol in the form of triose phosphates. This chain is Triose phosphate/phosphate translocator, chloroplastic, found in Spinacia oleracea (Spinach).